The primary structure comprises 313 residues: Ribosomal protein L11 methyltransferase (313 aa).

Residues threonine 164, glycine 185, aspartate 207, and asparagine 249 each coordinate S-adenosyl-L-methionine.

It belongs to the methyltransferase superfamily. PrmA family.

The protein resides in the cytoplasm. It carries out the reaction L-lysyl-[protein] + 3 S-adenosyl-L-methionine = N(6),N(6),N(6)-trimethyl-L-lysyl-[protein] + 3 S-adenosyl-L-homocysteine + 3 H(+). Its function is as follows. Methylates ribosomal protein L11. The chain is Ribosomal protein L11 methyltransferase from Clostridium perfringens (strain ATCC 13124 / DSM 756 / JCM 1290 / NCIMB 6125 / NCTC 8237 / Type A).